The chain runs to 322 residues: N-acetyl-gamma-glutamyl-phosphate reductase (322 aa).

Cysteine 132 is an active-site residue.

The protein belongs to the NAGSA dehydrogenase family. Type 1 subfamily.

The protein resides in the cytoplasm. It catalyses the reaction N-acetyl-L-glutamate 5-semialdehyde + phosphate + NADP(+) = N-acetyl-L-glutamyl 5-phosphate + NADPH + H(+). The protein operates within amino-acid biosynthesis; L-arginine biosynthesis; N(2)-acetyl-L-ornithine from L-glutamate: step 3/4. Its function is as follows. Catalyzes the NADPH-dependent reduction of N-acetyl-5-glutamyl phosphate to yield N-acetyl-L-glutamate 5-semialdehyde. The protein is N-acetyl-gamma-glutamyl-phosphate reductase of Bacteroides fragilis (strain YCH46).